The following is a 351-amino-acid chain: Epoxyqueuosine reductase (351 aa).

Catalysis depends on Asp-131, which acts as the Proton donor. Residues Glu-177–Arg-205 form the 4Fe-4S ferredoxin-type domain. [4Fe-4S] cluster is bound by residues Cys-185, Cys-188, Cys-191, Cys-195, Cys-211, Cys-237, Cys-240, and Cys-244.

It belongs to the QueG family. Monomer. It depends on cob(II)alamin as a cofactor. Requires [4Fe-4S] cluster as cofactor.

It is found in the cytoplasm. The catalysed reaction is epoxyqueuosine(34) in tRNA + AH2 = queuosine(34) in tRNA + A + H2O. It participates in tRNA modification; tRNA-queuosine biosynthesis. Catalyzes the conversion of epoxyqueuosine (oQ) to queuosine (Q), which is a hypermodified base found in the wobble positions of tRNA(Asp), tRNA(Asn), tRNA(His) and tRNA(Tyr). The chain is Epoxyqueuosine reductase from Lactococcus garvieae (strain Lg2) (Enterococcus seriolicida).